A 353-amino-acid chain; its full sequence is Phosphate acyltransferase (353 aa).

The protein belongs to the PlsX family. In terms of assembly, homodimer. Probably interacts with PlsY.

It is found in the cytoplasm. It carries out the reaction a fatty acyl-[ACP] + phosphate = an acyl phosphate + holo-[ACP]. It functions in the pathway lipid metabolism; phospholipid metabolism. Functionally, catalyzes the reversible formation of acyl-phosphate (acyl-PO(4)) from acyl-[acyl-carrier-protein] (acyl-ACP). This enzyme utilizes acyl-ACP as fatty acyl donor, but not acyl-CoA. The sequence is that of Phosphate acyltransferase from Ralstonia pickettii (strain 12J).